Consider the following 276-residue polypeptide: Putative non-heme chloroperoxidase (276 aa).

The 238-residue stretch at 26–263 (PIVLIHGFPL…GGPHAINWTH (238 aa)) folds into the AB hydrolase-1 domain. Active-site residues include S99, D228, and H257.

Belongs to the AB hydrolase superfamily. Bacterial non-heme haloperoxidase / perhydrolase family.

This chain is Putative non-heme chloroperoxidase, found in Synechocystis sp. (strain ATCC 27184 / PCC 6803 / Kazusa).